The primary structure comprises 63 residues: Large ribosomal subunit protein uL29 (63 aa).

It belongs to the universal ribosomal protein uL29 family.

The polypeptide is Large ribosomal subunit protein uL29 (Baumannia cicadellinicola subsp. Homalodisca coagulata).